Here is a 665-residue protein sequence, read N- to C-terminus: Probable potassium transport system protein Kup (665 aa).

Low complexity predominate over residues 1 to 18 (MASEAPHASAPDCAPASS). Positions 1–31 (MASEAPHASAPDCAPASSDIPQQDGGSTNGH) are disordered. The next 12 helical transmembrane spans lie at 40 to 60 (FFAL…TSPL), 83 to 103 (VVSL…VVFI), 131 to 151 (LVFV…VITP), 171 to 191 (GVTN…LFFI), 202 to 222 (LFGP…LMNL), 245 to 265 (GLTG…VEAL), 281 to 301 (WLFF…AFAL), 332 to 352 (LVLL…TGAF), 380 to 400 (IFVP…MFTF), 409 to 429 (AYGL…FIVM), 435 to 455 (WSMP…ITFL), and 462 to 482 (FFSG…IMAT).

The protein belongs to the HAK/KUP transporter (TC 2.A.72) family.

It is found in the cell inner membrane. It catalyses the reaction K(+)(in) + H(+)(in) = K(+)(out) + H(+)(out). In terms of biological role, transport of potassium into the cell. Likely operates as a K(+):H(+) symporter. This Caulobacter vibrioides (strain ATCC 19089 / CIP 103742 / CB 15) (Caulobacter crescentus) protein is Probable potassium transport system protein Kup.